We begin with the raw amino-acid sequence, 406 residues long: S-adenosylmethionine synthase (406 aa).

Position 17 (H17) interacts with ATP. D19 provides a ligand contact to Mg(2+). Residue E45 coordinates K(+). Residues E58 and Q101 each contribute to the L-methionine site. Residues 101–111 (QSAEINQGVAR) are flexible loop. Residues 178 to 180 (DGK), D258, 264 to 265 (RK), A281, and K285 contribute to the ATP site. D258 provides a ligand contact to L-methionine. Position 289 (K289) interacts with L-methionine.

The protein belongs to the AdoMet synthase family. Homotetramer; dimer of dimers. It depends on Mg(2+) as a cofactor. Requires K(+) as cofactor.

It localises to the cytoplasm. It carries out the reaction L-methionine + ATP + H2O = S-adenosyl-L-methionine + phosphate + diphosphate. Its pathway is amino-acid biosynthesis; S-adenosyl-L-methionine biosynthesis; S-adenosyl-L-methionine from L-methionine: step 1/1. In terms of biological role, catalyzes the formation of S-adenosylmethionine (AdoMet) from methionine and ATP. The overall synthetic reaction is composed of two sequential steps, AdoMet formation and the subsequent tripolyphosphate hydrolysis which occurs prior to release of AdoMet from the enzyme. This chain is S-adenosylmethionine synthase, found in Bifidobacterium longum (strain NCC 2705).